Consider the following 483-residue polypeptide: Putative inorganic phosphate cotransporter (483 aa).

7 helical membrane passes run 64 to 84 (YILS…GILA), 90 to 110 (LRFL…VPVA), 187 to 207 (IFYV…IFVY), 292 to 312 (LPYL…DWMI), 349 to 369 (ALTL…YSGF), 383 to 403 (FLMS…PIAA), and 420 to 440 (IVFF…NIFG). The interval 447 to 483 (WDNPSEDEQKPALESSSTTNPPRLSNGSSAPRAISSS) is disordered. Residues 460–483 (ESSSTTNPPRLSNGSSAPRAISSS) show a composition bias toward polar residues.

The protein belongs to the major facilitator superfamily. Sodium/anion cotransporter family.

Its subcellular location is the membrane. Its function is as follows. May be an inorganic phosphate cotransporter. In Drosophila ananassae (Fruit fly), this protein is Putative inorganic phosphate cotransporter (Picot).